Reading from the N-terminus, the 1978-residue chain is Dedicator of cytokinesis protein 4 (1978 aa).

The region spanning 6 to 67 is the SH3 domain; the sequence is EHEKYGVVIA…PSSYVHLKNA (62 aa). Residue tyrosine 167 is modified to Phosphotyrosine. The residue at position 193 (threonine 193) is a Phosphothreonine. Positions 401 to 574 constitute a C2 DOCK-type domain; that stretch reads RNDLYITVER…ESFWITSFLC (174 aa). Residues 1199–1605 form the DOCKER domain; sequence KTELNKEEMY…FGIQEFPACI (407 aa). A phosphoserine mark is found at serine 1608, serine 1616, serine 1623, serine 1627, serine 1629, and serine 1640. Disordered stretches follow at residues 1657 to 1738 and 1751 to 1978; these read SQAS…IYPT and IGDG…VSQL. Residues 1681-1712 show a composition bias toward low complexity; it reads PSPSTSSLSSTHSASPNVTSSAPSSARASPLL. Phosphoserine is present on serine 1778. The SH3-binding motif lies at 1797–1803; that stretch reads PPVPPRP. Over residues 1804–1818 the composition is skewed to polar residues; it reads TQTASPARHTTSVSP. Residues 1842–1872 are compositionally biased toward low complexity; it reads SPGLSSNSPVLSGSYSSGISSLSRCSTSETS. The segment covering 1873–1882 has biased composition (polar residues); sequence GFENQANEQS. Pro residues predominate over residues 1885 to 1895; the sequence is VPVPVPVPVPV. A compositionally biased stretch (basic and acidic residues) spans 1953–1966; that stretch reads SHLENGTRRTEPGP.

The protein belongs to the DOCK family. As to quaternary structure, interacts with nucleotide-free Rap1; functions as a guanine nucleotide exchange factor (GEF) for Rap1. Interacts (via DOCKER domain) with RAC1; functions as a guanine nucleotide exchange factor (GEF) for RAC1. Interacts with the SH3 domain of CRK. Interacts with FASLG. Interacts with ELMO2 and EPHA2; mediates activation of RAC1 by EPHA2. Interacts with USH1C (via PDZ 1 domain). In terms of tissue distribution, expressed in inner ear (at protein level).

It is found in the cell membrane. The protein resides in the cytoplasm. It localises to the cytosol. In terms of biological role, functions as a guanine nucleotide exchange factor (GEF) that promotes the exchange of GDP to GTP, converting inactive GDP-bound small GTPases into their active GTP-bound form. Involved in regulation of adherens junction between cells. Plays a role in cell migration. Has a higher guanine nucleotide exchange factor activity compared to other isoforms. In Mus musculus (Mouse), this protein is Dedicator of cytokinesis protein 4 (Dock4).